Here is a 333-residue protein sequence, read N- to C-terminus: DNA-directed RNA polymerase subunit alpha (333 aa).

The alpha N-terminal domain (alpha-NTD) stretch occupies residues 1–233 (MVQEKLRFST…DLFIPFLHAE (233 aa)). Residues 266-333 (KKEIALKSIF…DILKIQKYFT (68 aa)) form an alpha C-terminal domain (alpha-CTD) region.

Belongs to the RNA polymerase alpha chain family. In plastids the minimal PEP RNA polymerase catalytic core is composed of four subunits: alpha, beta, beta', and beta''. When a (nuclear-encoded) sigma factor is associated with the core the holoenzyme is formed, which can initiate transcription.

The protein resides in the plastid. It localises to the chloroplast. It catalyses the reaction RNA(n) + a ribonucleoside 5'-triphosphate = RNA(n+1) + diphosphate. DNA-dependent RNA polymerase catalyzes the transcription of DNA into RNA using the four ribonucleoside triphosphates as substrates. The protein is DNA-directed RNA polymerase subunit alpha of Phaseolus angularis (Azuki bean).